The sequence spans 946 residues: Aminopeptidase N (946 aa).

The N-terminal stretch at Met-1–Gly-15 is a signal peptide. Asn-60 carries N-linked (GlcNAc...) asparagine glycosylation. Substrate is bound at residue Gly-308–Asn-312. His-344 is a Zn(2+) binding site. Glu-345 functions as the Proton acceptor in the catalytic mechanism. Zn(2+)-binding residues include His-348 and Glu-367. Asn-550 and Asn-605 each carry an N-linked (GlcNAc...) asparagine glycan. 2 disulfides stabilise this stretch: Cys-715-Cys-722 and Cys-751-Cys-787.

This sequence belongs to the peptidase M1 family. Requires Zn(2+) as cofactor.

The protein resides in the cell membrane. The enzyme catalyses Release of an N-terminal amino acid, Xaa-|-Yaa- from a peptide, amide or arylamide. Xaa is preferably Ala, but may be most amino acids including Pro (slow action). When a terminal hydrophobic residue is followed by a prolyl residue, the two may be released as an intact Xaa-Pro dipeptide.. This chain is Aminopeptidase N (APN1), found in Plutella xylostella (Diamondback moth).